Here is a 903-residue protein sequence, read N- to C-terminus: Translation initiation factor IF-2 (903 aa).

Residues 49 to 314 (LNREHGSGPD…GSSLQQGFNK (266 aa)) form a disordered region. A compositionally biased stretch (polar residues) spans 68 to 82 (STLNIQGTGGKSKSV). Basic and acidic residues-rich tracts occupy residues 93–163 (VKRD…EAAE) and 174–225 (EVSK…ENAT). Residues 265 to 279 (GRARPAKVARQKKSN) are compositionally biased toward basic residues. Basic and acidic residues predominate over residues 280–293 (KHSESKADREEARA). The region spanning 402 to 571 (PRAPVVTIMG…LLQSEVLELK (170 aa)) is the tr-type G domain. Residues 411-418 (GHVDHGKT) are G1. 411–418 (GHVDHGKT) is a GTP binding site. Residues 436–440 (GITQH) form a G2 region. Positions 457–460 (DTPG) are G3. GTP-binding positions include 457 to 461 (DTPGH) and 511 to 514 (NKID). Residues 511-514 (NKID) are G4. The interval 547 to 549 (SAK) is G5.

This sequence belongs to the TRAFAC class translation factor GTPase superfamily. Classic translation factor GTPase family. IF-2 subfamily.

It is found in the cytoplasm. One of the essential components for the initiation of protein synthesis. Protects formylmethionyl-tRNA from spontaneous hydrolysis and promotes its binding to the 30S ribosomal subunits. Also involved in the hydrolysis of GTP during the formation of the 70S ribosomal complex. In Cronobacter sakazakii (strain ATCC BAA-894) (Enterobacter sakazakii), this protein is Translation initiation factor IF-2.